The primary structure comprises 307 residues: Glycine--tRNA ligase alpha subunit (307 aa).

The protein belongs to the class-II aminoacyl-tRNA synthetase family. In terms of assembly, tetramer of two alpha and two beta subunits.

Its subcellular location is the cytoplasm. The catalysed reaction is tRNA(Gly) + glycine + ATP = glycyl-tRNA(Gly) + AMP + diphosphate. In Aeromonas salmonicida (strain A449), this protein is Glycine--tRNA ligase alpha subunit.